The following is a 367-amino-acid chain: Undecaprenyl-phosphate alpha-N-acetylglucosaminyl 1-phosphate transferase (367 aa).

The next 9 helical transmembrane spans lie at 3-23 (LLTALSELISIFLFTTIFIFL), 45-65 (GVIPLVGGISVFAGICFMFGL), 69-89 (YIPHLSLYLICAGVLVFVGAM), 129-149 (WELVLGPFGYFLTLFAVWAAI), 158-178 (IDGLLGGLSSVSFAAMGLILW), 187-207 (MWCFAMIAAILPYIMLNLGIL), 213-233 (VFMGDAGSTLIGFTVIWLLLE), 242-262 (ISPVTALWIIAIPLMDMVAIM), and 318-338 (VPEWVMLVLFLLAFFLYGYCI).

Belongs to the glycosyltransferase 4 family. WecA subfamily. Mg(2+) serves as cofactor. Mn(2+) is required as a cofactor.

The protein resides in the cell inner membrane. The enzyme catalyses di-trans,octa-cis-undecaprenyl phosphate + UDP-N-acetyl-alpha-D-glucosamine = N-acetyl-alpha-D-glucosaminyl-di-trans,octa-cis-undecaprenyl diphosphate + UMP. It participates in bacterial outer membrane biogenesis; LPS O-antigen biosynthesis. The protein operates within bacterial outer membrane biogenesis; enterobacterial common antigen biosynthesis. Functionally, catalyzes the transfer of the GlcNAc-1-phosphate moiety from UDP-GlcNAc onto the carrier lipid undecaprenyl phosphate (C55-P), yielding GlcNAc-pyrophosphoryl-undecaprenyl (GlcNAc-PP-C55). This Salmonella typhi protein is Undecaprenyl-phosphate alpha-N-acetylglucosaminyl 1-phosphate transferase.